We begin with the raw amino-acid sequence, 380 residues long: Protein Wnt-5a (380 aa).

The first 35 residues, 1 to 35 (MKKSIGILSPGVALGMAGSAMSSKFFLVALAIFFS), serve as a signal peptide directing secretion. Residues 36–61 (FAQVVIEANSWWSLGMNNPVQMSEVY) constitute a propeptide that is removed on maturation. An intrachain disulfide couples Cys-104 to Cys-115. Asn-114 and Asn-120 each carry an N-linked (GlcNAc...) asparagine glycan. 10 cysteine pairs are disulfide-bonded: Cys-154–Cys-162, Cys-164–Cys-182, Cys-238–Cys-252, Cys-240–Cys-247, Cys-309–Cys-340, Cys-325–Cys-335, Cys-339–Cys-379, Cys-355–Cys-370, Cys-357–Cys-367, and Cys-362–Cys-363. Residue Ser-244 is the site of O-palmitoleoyl serine; by PORCN attachment. N-linked (GlcNAc...) asparagine glycosylation is found at Asn-312 and Asn-326.

Belongs to the Wnt family. Forms a soluble 1:1 complex with AFM; this prevents oligomerization and is required for prolonged biological activity. The complex with AFM may represent the physiological form in body fluids. Homooligomer; disulfide-linked, leading to inactivation (in vitro). Interacts with PORCN. Interacts with WLS. Interacts with glypican GCP3. Interacts with PKD1 (via extracellular domain). Interacts with TMEM67. Post-translationally, glycosylation is necessary for secretion but not for activity. In terms of processing, palmitoleoylation is required for efficient binding to frizzled receptors. Depalmitoleoylation leads to Wnt signaling pathway inhibition. Proteolytic processing by TIKI1 and TIKI2 promotes oxidation and formation of large disulfide-bond oligomers, leading to inactivation of WNT5A. As to expression, expression is increased in differentiated thyroid carcinomas compared to normal thyroid tissue and anaplastic thyroid tumors where expression is low or undetectable. Expression is found in thyrocytes but not in stromal cells (at protein level). Detected in neonate heart and lung.

It localises to the secreted. It is found in the extracellular space. Its subcellular location is the extracellular matrix. In terms of biological role, ligand for members of the frizzled family of seven transmembrane receptors. Can activate or inhibit canonical Wnt signaling, depending on receptor context. In the presence of FZD4, activates beta-catenin signaling. In the presence of ROR2, inhibits the canonical Wnt pathway by promoting beta-catenin degradation through a GSK3-independent pathway which involves down-regulation of beta-catenin-induced reporter gene expression. Suppression of the canonical pathway allows chondrogenesis to occur and inhibits tumor formation. Stimulates cell migration. Decreases proliferation, migration, invasiveness and clonogenicity of carcinoma cells and may act as a tumor suppressor. Mediates motility of melanoma cells. Required during embryogenesis for extension of the primary anterior-posterior axis and for outgrowth of limbs and the genital tubercle. Inhibits type II collagen expression in chondrocytes. The chain is Protein Wnt-5a (WNT5A) from Homo sapiens (Human).